Consider the following 227-residue polypeptide: DNA mismatch repair protein MutH (227 aa).

This sequence belongs to the MutH family.

The protein resides in the cytoplasm. Sequence-specific endonuclease that cleaves unmethylated GATC sequences. It is involved in DNA mismatch repair. This chain is DNA mismatch repair protein MutH, found in Vibrio vulnificus (strain CMCP6).